The sequence spans 122 residues: Large ribosomal subunit protein uL18 (122 aa).

The protein belongs to the universal ribosomal protein uL18 family. In terms of assembly, part of the 50S ribosomal subunit; part of the 5S rRNA/L5/L18/L25 subcomplex. Contacts the 5S and 23S rRNAs.

This is one of the proteins that bind and probably mediate the attachment of the 5S RNA into the large ribosomal subunit, where it forms part of the central protuberance. In Thermosipho africanus (strain TCF52B), this protein is Large ribosomal subunit protein uL18.